Reading from the N-terminus, the 380-residue chain is Glucose-1-phosphate adenylyltransferase (380 aa).

Alpha-D-glucose 1-phosphate is bound by residues G164, E179–K180, and S190.

This sequence belongs to the bacterial/plant glucose-1-phosphate adenylyltransferase family. Homotetramer.

It catalyses the reaction alpha-D-glucose 1-phosphate + ATP + H(+) = ADP-alpha-D-glucose + diphosphate. It participates in glycan biosynthesis; glycogen biosynthesis. Its function is as follows. Involved in the biosynthesis of ADP-glucose, a building block required for the elongation reactions to produce glycogen. Catalyzes the reaction between ATP and alpha-D-glucose 1-phosphate (G1P) to produce pyrophosphate and ADP-Glc. The sequence is that of Glucose-1-phosphate adenylyltransferase from Streptococcus sanguinis (strain SK36).